A 145-amino-acid chain; its full sequence is UPF0179 protein TV1250 (145 aa).

It belongs to the UPF0179 family.

The polypeptide is UPF0179 protein TV1250 (Thermoplasma volcanium (strain ATCC 51530 / DSM 4299 / JCM 9571 / NBRC 15438 / GSS1)).